The following is a 538-amino-acid chain: Bifunctional purine biosynthesis protein PurH (538 aa).

The MGS-like domain occupies 8 to 158 (IPAPDKVEIK…KNHAYVTILT (151 aa)).

It belongs to the PurH family.

The catalysed reaction is (6R)-10-formyltetrahydrofolate + 5-amino-1-(5-phospho-beta-D-ribosyl)imidazole-4-carboxamide = 5-formamido-1-(5-phospho-D-ribosyl)imidazole-4-carboxamide + (6S)-5,6,7,8-tetrahydrofolate. The enzyme catalyses IMP + H2O = 5-formamido-1-(5-phospho-D-ribosyl)imidazole-4-carboxamide. It participates in purine metabolism; IMP biosynthesis via de novo pathway; 5-formamido-1-(5-phospho-D-ribosyl)imidazole-4-carboxamide from 5-amino-1-(5-phospho-D-ribosyl)imidazole-4-carboxamide (10-formyl THF route): step 1/1. The protein operates within purine metabolism; IMP biosynthesis via de novo pathway; IMP from 5-formamido-1-(5-phospho-D-ribosyl)imidazole-4-carboxamide: step 1/1. This Rhizobium etli (strain ATCC 51251 / DSM 11541 / JCM 21823 / NBRC 15573 / CFN 42) protein is Bifunctional purine biosynthesis protein PurH.